A 228-amino-acid chain; its full sequence is 7-cyano-7-deazaguanine synthase (228 aa).

7 to 17 (LSGGLDSAVNL) is an ATP binding site. 4 residues coordinate Zn(2+): cysteine 192, cysteine 200, cysteine 203, and cysteine 206.

It belongs to the QueC family. As to quaternary structure, homodimer. Requires Zn(2+) as cofactor.

The enzyme catalyses 7-carboxy-7-deazaguanine + NH4(+) + ATP = 7-cyano-7-deazaguanine + ADP + phosphate + H2O + H(+). It participates in purine metabolism; 7-cyano-7-deazaguanine biosynthesis. Catalyzes the ATP-dependent conversion of 7-carboxy-7-deazaguanine (CDG) to 7-cyano-7-deazaguanine (preQ(0)). This Desulforamulus reducens (strain ATCC BAA-1160 / DSM 100696 / MI-1) (Desulfotomaculum reducens) protein is 7-cyano-7-deazaguanine synthase.